The chain runs to 1132 residues: DNA-directed RNA polymerase I subunit RPA2 (1132 aa).

The C4-type zinc-finger motif lies at 1067–1098; sequence CMDCGSLLSPLLEKPPPNWSATRHRKTICLLC.

Belongs to the RNA polymerase beta chain family. As to quaternary structure, component of the RNA polymerase I (Pol I) complex consisting of at least 13 subunits.

The protein resides in the nucleus. It localises to the nucleolus. Its subcellular location is the chromosome. It carries out the reaction RNA(n) + a ribonucleoside 5'-triphosphate = RNA(n+1) + diphosphate. In terms of biological role, DNA-dependent RNA polymerase catalyzes the transcription of DNA into RNA using the four ribonucleoside triphosphates as substrates. Second largest core component of RNA polymerase I which synthesizes ribosomal RNA precursors. Proposed to contribute to the polymerase catalytic activity and forms the polymerase active center together with the largest subunit. Pol I is composed of mobile elements and RPA2 is part of the core element with the central large cleft and probably a clamp element that moves to open and close the cleft. The sequence is that of DNA-directed RNA polymerase I subunit RPA2 (polr1b) from Danio rerio (Zebrafish).